Here is a 229-residue protein sequence, read N- to C-terminus: Large ribosomal subunit protein uL3 (229 aa).

Gln-151 carries the post-translational modification N5-methylglutamine.

It belongs to the universal ribosomal protein uL3 family. Part of the 50S ribosomal subunit. Forms a cluster with proteins L14 and L19. Post-translationally, methylated by PrmB.

In terms of biological role, one of the primary rRNA binding proteins, it binds directly near the 3'-end of the 23S rRNA, where it nucleates assembly of the 50S subunit. This is Large ribosomal subunit protein uL3 from Paramagnetospirillum magneticum (strain ATCC 700264 / AMB-1) (Magnetospirillum magneticum).